We begin with the raw amino-acid sequence, 227 residues long: Brain acid soluble protein 1 (227 aa).

Residues 1–11 (MGGKLSKKKKG) are compositionally biased toward basic residues. Residues 1-227 (MGGKLSKKKK…NSDQTVTVKE (227 aa)) are disordered. Gly-2 carries the N-myristoyl glycine lipid modification. The span at 15 to 27 (NDEKAKEKDKKAE) shows a compositional bias: basic and acidic residues. Residue Lys-25 forms a Glycyl lysine isopeptide (Lys-Gly) (interchain with G-Cter in SUMO2) linkage. 2 positions are modified to phosphothreonine: Thr-31 and Thr-36. Ser-40 carries the phosphoserine modification. Residues 49-105 (AEAKEGKEKPDQDAEGKAEEKEGEKDAAAAKEEAPKAEPEKTEGAAEAKAEPPKAPE) show a composition bias toward basic and acidic residues. Residues Lys-84 and Lys-97 each participate in a glycyl lysine isopeptide (Lys-Gly) (interchain with G-Cter in SUMO2) cross-link. Positions 106–139 (QEQAAPGPAAGGEAPKAAEAAAAPAESAAPAAGE) are enriched in low complexity. Residues 140–152 (EPSKEEGEPKKTE) show a composition bias toward basic and acidic residues. Lys-163 participates in a covalent cross-link: Glycyl lysine isopeptide (Lys-Gly) (interchain with G-Cter in SUMO2). 5 positions are modified to phosphoserine: Ser-164, Ser-170, Ser-172, Ser-176, and Ser-195. Over residues 173–185 (KPGSSEAAPSSKE) the composition is skewed to polar residues. At Thr-196 the chain carries Phosphothreonine. Residues Ser-205 and Ser-219 each carry the phosphoserine modification. The span at 218 to 227 (NSDQTVTVKE) shows a compositional bias: polar residues.

In terms of tissue distribution, brain.

The protein resides in the cell membrane. The protein localises to the cell projection. Its subcellular location is the growth cone. The chain is Brain acid soluble protein 1 (BASP1) from Homo sapiens (Human).